Consider the following 475-residue polypeptide: Ribulose bisphosphate carboxylase large chain (475 aa).

Positions M1 to V2 are excised as a propeptide. P3 bears the N-acetylproline mark. K14 bears the N6,N6,N6-trimethyllysine mark. Residues N123 and T173 each contribute to the substrate site. The active-site Proton acceptor is K175. K177 serves as a coordination point for substrate. Positions 201, 203, and 204 each coordinate Mg(2+). N6-carboxylysine is present on K201. H294 serves as the catalytic Proton acceptor. 3 residues coordinate substrate: R295, H327, and S379.

The protein belongs to the RuBisCO large chain family. Type I subfamily. Heterohexadecamer of 8 large chains and 8 small chains. Requires Mg(2+) as cofactor.

Its subcellular location is the plastid. It localises to the chloroplast. The catalysed reaction is 2 (2R)-3-phosphoglycerate + 2 H(+) = D-ribulose 1,5-bisphosphate + CO2 + H2O. It catalyses the reaction D-ribulose 1,5-bisphosphate + O2 = 2-phosphoglycolate + (2R)-3-phosphoglycerate + 2 H(+). Its function is as follows. RuBisCO catalyzes two reactions: the carboxylation of D-ribulose 1,5-bisphosphate, the primary event in carbon dioxide fixation, as well as the oxidative fragmentation of the pentose substrate in the photorespiration process. Both reactions occur simultaneously and in competition at the same active site. The chain is Ribulose bisphosphate carboxylase large chain from Stigeoclonium helveticum (Green alga).